The following is a 113-amino-acid chain: uncharacterized protein (113 aa).

The signal sequence occupies residues 1–22; that stretch reads MCRFPTFLLIAIAITMLPTILS. N47 carries N-linked (GlcNAc...) asparagine glycosylation.

It is found in the secreted. This is an uncharacterized protein from Caenorhabditis elegans.